The sequence spans 178 residues: Large ribosomal subunit protein uL6 (178 aa).

This sequence belongs to the universal ribosomal protein uL6 family. As to quaternary structure, part of the 50S ribosomal subunit.

Functionally, this protein binds to the 23S rRNA, and is important in its secondary structure. It is located near the subunit interface in the base of the L7/L12 stalk, and near the tRNA binding site of the peptidyltransferase center. This chain is Large ribosomal subunit protein uL6, found in Campylobacter hominis (strain ATCC BAA-381 / DSM 21671 / CCUG 45161 / LMG 19568 / NCTC 13146 / CH001A).